Consider the following 937-residue polypeptide: Outer membrane usher protein CS3-2 (937 aa).

It belongs to the fimbrial export usher family. A 97 kDa form of the protein is thought to be due to post-translational processing of isoform 104 kDa.

It localises to the cell outer membrane. In terms of biological role, these proteins are essential for the biogenesis of mature CS3 pili, but not for synthesis of the CS3 pilin subunit. This chain is Outer membrane usher protein CS3-2, found in Escherichia coli.